The following is a 132-amino-acid chain: MSTTHNVPQGDLVLRTLAMPADTNANGDIFGGWLMSQMDIGGAILAKEIAHGRVVTVRVEGMTFLRPVAVGDVVCCYARCVQKGTTSVSINIEVWVKKVASEPIGQRYKATEALFKYVAVDPEGKPRALPVE.

The region spanning 8-123 (PQGDLVLRTL…LFKYVAVDPE (116 aa)) is the HotDog ACOT-type domain.

It belongs to the acyl coenzyme A hydrolase family.

Catalyzes the hydrolysis of the thioester bond in palmitoyl-CoA and malonyl-CoA. The polypeptide is Acyl-CoA thioester hydrolase YciA (yciA) (Escherichia coli O6:H1 (strain CFT073 / ATCC 700928 / UPEC)).